The chain runs to 177 residues: CASP-like protein 4D1 (177 aa).

The Cytoplasmic portion of the chain corresponds to 1–20 (MTAPTAPSMAAPPAPSMVSR). Residues 21-41 (MTALFLRVLTFAFLMVSLVIM) traverse the membrane as a helical segment. Over 42–66 (TTNTGTIEIGIDEFKVRSKDFYSYR) the chain is Extracellular. Residues 67 to 87 (YMLAAIAFGLTYTILQIALTL) traverse the membrane as a helical segment. The Cytoplasmic segment spans residues 88 to 107 (NHISKRNGAQTSGDGNLVFD). The chain crosses the membrane as a helical span at residues 108 to 128 (FYGDKVVSYILATGAAAAFGA). At 129–153 (TKELKTQLAGLGGDKFFNKGYASAS) the chain is on the extracellular side. The chain crosses the membrane as a helical span at residues 154-174 (LLLLGFVCTAILSVFSSYALP). The Cytoplasmic portion of the chain corresponds to 175–177 (KKV).

The protein belongs to the Casparian strip membrane proteins (CASP) family. In terms of assembly, homodimer and heterodimers.

It is found in the cell membrane. This Populus trichocarpa (Western balsam poplar) protein is CASP-like protein 4D1.